The chain runs to 685 residues: Serotransferrin (685 aa).

A signal peptide spans 1 to 16; sequence MKPLLLLPLLGCLATI. 2 consecutive Transferrin-like domains span residues 23–329 and 340–666; these read VKWC…ALKI and MKWC…SLRT. Cys26 and Cys48 are disulfide-bonded. Positions 72 and 102 each coordinate Fe(3+). Disulfide bonds link Cys125-Cys206, Cys170-Cys184, and Cys234-Cys248. Hydrogencarbonate-binding residues include Thr127, Lys131, Ala133, and Gly134. Position 200 (Tyr200) interacts with Fe(3+). His256 provides a ligand contact to Fe(3+). 2 disulfides stabilise this stretch: Cys343/Cys379 and Cys353/Cys370. Residues Asp394 and Tyr428 each coordinate Fe(3+). Intrachain disulfides connect Cys404/Cys678, Cys419/Cys639, Cys451/Cys526, Cys475/Cys667, Cys485/Cys499, Cys496/Cys509, and Cys566/Cys580. Hydrogencarbonate-binding residues include Thr453, Arg457, Ala459, and Gly460. Asn476 carries an N-linked (GlcNAc...) asparagine glycan. Fe(3+) is bound at residue Tyr520. A Fe(3+)-binding site is contributed by His588.

Belongs to the transferrin family. Monomer.

Its subcellular location is the secreted. Its function is as follows. Transferrins are iron binding transport proteins which can bind two Fe(3+) ions in association with the binding of an anion, usually bicarbonate. In Paralichthys olivaceus (Bastard halibut), this protein is Serotransferrin (tf).